The following is a 299-amino-acid chain: Protein phosphatase 1 regulatory subunit 3D (299 aa).

The tract at residues 1–22 (MSRGPSSAVLPSALGSRKLGPR) is disordered. Ser23, Ser25, and Ser28 each carry phosphoserine. A disordered region spans residues 37–94 (EPRACRPPGSPGRAPPPTPAPSGCDPRLRPIILRRARSLPSSPERRQKAAGAPGAACR). Pro residues predominate over residues 44-56 (PGSPGRAPPPTPA). The segment covering 57 to 67 (PSGCDPRLRPI) has biased composition (low complexity). Ser74 carries the post-translational modification Phosphoserine. Low complexity predominate over residues 85–94 (AAGAPGAACR). Positions 101-104 (LRVR) match the PP1-binding motif motif. Residue Ser133 is modified to Phosphoserine. Residues 169-278 (GERLQRQLVC…NNDHRDYSLT (110 aa)) enclose the CBM21 domain.

Interacts with PPP1CC catalytic subunit of PP1, and associates with glycogen. Interacts with EPM2A; in the presence of NHLC1/malin the interaction leads to PPP1R3D ubiquitination and autophagic degradation. As to expression, expressed in all tissues tested. High expression in skeletal muscle and heart.

Functionally, seems to act as a glycogen-targeting subunit for PP1. PP1 is essential for cell division, and participates in the regulation of glycogen metabolism, muscle contractility and protein synthesis. The chain is Protein phosphatase 1 regulatory subunit 3D (PPP1R3D) from Homo sapiens (Human).